The chain runs to 273 residues: uncharacterized protein (273 aa).

Over residues 1 to 10 (MSSKKVKYNP) the composition is skewed to basic residues. Disordered stretches follow at residues 1–32 (MSSKKVKYNPRKSASQNEATSASAGSKAFGFN) and 50–124 (EDVE…QSSP). Composition is skewed to polar residues over residues 12–24 (KSASQNEATSASA), 55–64 (QSFNGKSSNL), and 92–124 (PQSSSQKPFASSTYNVELPTSPTKITNIGQSSP). A Phosphoserine modification is found at serine 123.

It localises to the nucleus. It is found in the cytoplasm. The protein resides in the cytoskeleton. The protein localises to the spindle. This is an uncharacterized protein from Schizosaccharomyces pombe (strain 972 / ATCC 24843) (Fission yeast).